We begin with the raw amino-acid sequence, 390 residues long: S-adenosylmethionine synthase 3 (390 aa).

Residue Glu-9 participates in Mg(2+) binding. Residue His-15 coordinates ATP. Residue Glu-43 participates in K(+) binding. The L-methionine site is built by Glu-56 and Gln-99. ATP is bound by residues 167–169, 235–238, Asp-246, 252–253, Ala-269, Lys-273, and Lys-277; these read DGK, SGRF, and RK. Position 246 (Asp-246) interacts with L-methionine. Residue Lys-277 participates in L-methionine binding.

Belongs to the AdoMet synthase family. In terms of assembly, homotetramer. Interacts with GRF3. Mn(2+) serves as cofactor. Requires Mg(2+) as cofactor. The cofactor is Co(2+). K(+) is required as a cofactor.

The protein localises to the cytoplasm. The enzyme catalyses L-methionine + ATP + H2O = S-adenosyl-L-methionine + phosphate + diphosphate. The protein operates within amino-acid biosynthesis; S-adenosyl-L-methionine biosynthesis; S-adenosyl-L-methionine from L-methionine: step 1/1. Its activity is regulated as follows. Inhibited by 5,5'-dithiobis-2-nitrobenzoic acid (DTNB) and N-ethylmaleimide (NEM) (in vitro). In terms of biological role, catalyzes the formation of S-adenosylmethionine from methionine and ATP. The reaction comprises two steps that are both catalyzed by the same enzyme: formation of S-adenosylmethionine (AdoMet) and triphosphate, and subsequent hydrolysis of the triphosphate. Involved in the biosynthesis of lignin. The chain is S-adenosylmethionine synthase 3 (METK3) from Arabidopsis thaliana (Mouse-ear cress).